Consider the following 349-residue polypeptide: Transcription elongation factor A protein 3 (349 aa).

Residues 5-82 (EELLRIAKKL…RNWKQLLDSP (78 aa)) form the TFIIS N-terminal domain. Residues 80–170 (DSPATPKGEK…RTPSSPSSPT (91 aa)) are disordered. The segment covering 101-110 (KGLDCSDWKP) has biased composition (basic and acidic residues). Residue Ser115 is modified to Phosphoserine. Basic and acidic residues predominate over residues 121 to 133 (RVEEPKDRRDSVD). Composition is skewed to low complexity over residues 134 to 144 (SKSSATSSPKR) and 160 to 170 (PRTPSSPSSPT). Ser141 bears the Phosphoserine mark. A TFIIS central domain is found at 188–304 (VRDKCVEMLS…EHQMAKTGGT (117 aa)). The TFIIS-type zinc-finger motif lies at 307–347 (DLFQCSKCKKKNCTYNQVQTRSADEPMTTFVLCNECGNRWK). Zn(2+)-binding residues include Cys311, Cys314, Cys339, and Cys342.

The protein belongs to the TFS-II family.

Its subcellular location is the nucleus. Its function is as follows. Necessary for efficient RNA polymerase II transcription elongation past template-encoded arresting sites. The arresting sites in DNA have the property of trapping a certain fraction of elongating RNA polymerases that pass through, resulting in locked ternary complexes. Cleavage of the nascent transcript by S-II allows the resumption of elongation from the new 3'-terminus. This is Transcription elongation factor A protein 3 (TCEA3) from Bos taurus (Bovine).